A 249-amino-acid chain; its full sequence is Type III pantothenate kinase (249 aa).

6-13 (DCGNSFIK) contacts ATP. Substrate is bound by residues Tyr-93 and 100–103 (GLDR). The active-site Proton acceptor is Asp-102. Asp-122 is a binding site for K(+). Thr-125 lines the ATP pocket. Thr-181 serves as a coordination point for substrate.

This sequence belongs to the type III pantothenate kinase family. Homodimer. It depends on NH4(+) as a cofactor. K(+) is required as a cofactor.

It localises to the cytoplasm. The enzyme catalyses (R)-pantothenate + ATP = (R)-4'-phosphopantothenate + ADP + H(+). It participates in cofactor biosynthesis; coenzyme A biosynthesis; CoA from (R)-pantothenate: step 1/5. Its function is as follows. Catalyzes the phosphorylation of pantothenate (Pan), the first step in CoA biosynthesis. In Pseudomonas savastanoi pv. phaseolicola (strain 1448A / Race 6) (Pseudomonas syringae pv. phaseolicola (strain 1448A / Race 6)), this protein is Type III pantothenate kinase.